The following is a 906-amino-acid chain: Protein translocase subunit SecA (906 aa).

ATP contacts are provided by residues Gln-89, 107-111 (GEGKT), and Asp-501. Zn(2+)-binding residues include Cys-891, Cys-893, Cys-902, and His-903.

It belongs to the SecA family. In terms of assembly, monomer and homodimer. Part of the essential Sec protein translocation apparatus which comprises SecA, SecYEG and auxiliary proteins SecDF-YajC and YidC. Requires Zn(2+) as cofactor.

The protein resides in the cell inner membrane. Its subcellular location is the cytoplasm. The catalysed reaction is ATP + H2O + cellular proteinSide 1 = ADP + phosphate + cellular proteinSide 2.. Part of the Sec protein translocase complex. Interacts with the SecYEG preprotein conducting channel. Has a central role in coupling the hydrolysis of ATP to the transfer of proteins into and across the cell membrane, serving both as a receptor for the preprotein-SecB complex and as an ATP-driven molecular motor driving the stepwise translocation of polypeptide chains across the membrane. This Parvibaculum lavamentivorans (strain DS-1 / DSM 13023 / NCIMB 13966) protein is Protein translocase subunit SecA.